A 170-amino-acid polypeptide reads, in one-letter code: Fimbrial protein (170 aa).

Residues 1–7 (MNTLQKG) constitute a propeptide, leader sequence. F8 carries the post-translational modification N-methylphenylalanine. A helical membrane pass occupies residues 8 to 28 (FTLIELMIVIAIVGILAAVAL). S70 is a glycosylation site (O-linked (Gal...) serine). The residue at position 100 (S100) is an O-(sn-1-glycerophosphoryl)serine. A disulfide bond links C127 and C163.

It belongs to the N-Me-Phe pilin family. The pili are polar flexible filaments of about 5.4 nanometers diameter and 2.5 micrometers average length; they consist of only a single polypeptide chain arranged in a helical configuration of five subunits per turn in the assembled pilus. Post-translationally, O-linked glycan has been reported to consist either of the Gal(alpha1-3) GlcNAc disaccharide, or the Gal(beta 1-4) Gal(alpha 1-3) 2,4-diacetamido-2,4,6-trideoxyhexose trisaccharide.

Its subcellular location is the fimbrium. The protein localises to the membrane. Major component of the type IV pilus (T4P) that plays a role in cellular adherence, microcolony formation as well as twitching motility. This is Fimbrial protein (pilE) from Neisseria meningitidis serogroup B (strain ATCC BAA-335 / MC58).